A 922-amino-acid chain; its full sequence is MIWLRNRRCLEPLQGTPKWVPVLGELQKTLQKGEYLPLRPLPMFESNFVQVTHQGGPVFVNHRTNRLAMGVAASLPGLVLPDILLIGQPAEDRDCSGLVLTRMIPLDLVHLCVHDLSAWRLKLRLVSGRQYYLALDAPDNEVGFLFHCWVRLINLLQEPAPTWTPRTTRTAPLDMPLAEAPASTWHLQDQPISRHAVRVAERNFPHKTVAAQRQRKAKALKRSFKSQAVGDSVPLIWSQLEHADVRKKPAEKKSHSDPRPDRTHTQIRLPEKTSITTWTIFSIISSTANQTQSSPKACTSASDEATGQGHVVESPSHCVSADSPDGFFLGSCSSLDPCLWHQDTEDLMDSGGSTLSSAASGLAPYPPAACLSTPYSSIPRGREKAGPMGSHQGPGPPPCQKAPSGLVTSCKAPFLVDQSQKLPAVPASSWKPPPGLAPPQKAPAASAPPRKAPAVPAPSQKAPAVPAPSQKAPAIPAPSRKASAASASPRKASAVPAPPQKTPPPSQKAPSVPTIPQKAVSPTAPKKKSLLLPAPSQKALPTSPTEYQMALSPPASRGKLPGDFDVLPTGIPGRAVLERSQSGGKPEPVVTVRTQETDVVEMTTQAKSPESPFTVTKKESKDILISQTKEVTLEAFRGQGKLEDWAHWAKLEERSPDLPGVRSKELEQRKRWVKAKELAVEGPSQEHSRPFSVEALTLTKLMITANSKEQPSKSALVSLPSWLLATPQASATSMMASVPSRPGQLSLLEGKPVVVREQPESHTWVKEGKRPWGEMKEQPWGEMKEPPWDPKGPPKVPFRSKPTSASLKREGISQAPIPLTASPWEDLRPSPLSETLISKMEATARASQQPKRVSQEPMRMPAQHPLATVGSSSEILLPMLLELETVRNTATKAEEIQEESGVLNLLPSLQHSQHSEWPDAGA.

6 disordered regions span residues 244–264 (DVRKKPAEKKSHSDPRPDRTH), 292–317 (QSSPKACTSASDEATGQGHVVESPSH), 373–404 (TPYSSIPRGREKAGPMGSHQGPGPPPCQKAPS), 424–597 (AVPA…TQET), 758–830 (QPES…LRPS), and 842–869 (ATARASQQPKRVSQEPMRMPAQHPLATV). Positions 292–305 (QSSPKACTSASDEA) are enriched in polar residues. Pro residues predominate over residues 431–441 (KPPPGLAPPQK). Composition is skewed to low complexity over residues 442–458 (APAASAPPRKAPAVPAP) and 471–495 (KAPAIPAPSRKASAASASPRKASAV). The segment covering 496-507 (PAPPQKTPPPSQ) has biased composition (pro residues). The span at 758 to 788 (QPESHTWVKEGKRPWGEMKEQPWGEMKEPPW) shows a compositional bias: basic and acidic residues.

Belongs to the GARIN family.

The protein is Golgi-associated RAB2 interactor protein 5B of Homo sapiens (Human).